The following is a 3084-amino-acid chain: Highly reducing polyketide synthase sdnO (3084 aa).

The Ketosynthase family 3 (KS3) domain maps to 4–430; it reads PIPLAVVGIA…GTNAHAVLEK (427 aa). Active-site for beta-ketoacyl synthase activity residues include C178, H313, and H353. The interval 541 to 841 is malonyl-CoA:ACP transacylase (MAT) domain; sequence FIFTGQGAQW…LAGPLRQSVA (301 aa). The For malonyltransferase activity role is filled by S632. Positions 931–1071 are N-terminal hotdog fold; it reads HDLLGLRMTD…GSVLIDLVSS (141 aa). The segment at 931–1243 is dehydratase (DH) domain; it reads HDLLGLRMTD…RSAEADMLVF (313 aa). Residues 931-1275 form the PKS/mFAS DH domain; the sequence is HDLLGLRMTD…LRSLAALDGA (345 aa). The active-site Proton acceptor; for dehydratase activity is the H963. A C-terminal hotdog fold region spans residues 1099 to 1275; the sequence is LQPGEDIPPS…LRSLAALDGA (177 aa). D1177 (proton donor; for dehydratase activity) is an active-site residue. The interval 1733-2045 is enoylreductase (ER) domain; the sequence is GTAHAATFVE…RHENMTKYVV (313 aa). The catalytic ketoreductase (KRc) domain stretch occupies residues 2069 to 2252; the sequence is ATYVVAGGLG…YMALNIGLIE (184 aa). In terms of domain architecture, Carrier spans 2363 to 2440; sequence DIEAFAARAI…ALARKVTLRS (78 aa). An O-(pantetheine 4'-phosphoryl)serine modification is found at S2400. The disordered stretch occupies residues 2445 to 2501; that stretch reads GGAGGDASSTGNSESMARTPSDSSTVPTSIPATPSRSPSREPPAKETLTKSQQHLPI. Residues 2456 to 2481 are compositionally biased toward polar residues; the sequence is NSESMARTPSDSSTVPTSIPATPSRS. Residues 2482–2492 show a composition bias toward basic and acidic residues; it reads PSREPPAKETL. The tract at residues 2864 to 3084 is choline/carnitine acyltransferase domain; it reads HFYSQLNRAF…LGVVRRVVEG (221 aa).

Its pathway is antibiotic biosynthesis. Its function is as follows. Highly reducing polyketide synthase; part of the gene cluster that mediates the biosynthesis of sordarin and hypoxysordarin, glycoside antibiotics with a unique tetracyclic diterpene aglycone structure. First, the geranylgeranyl diphosphate synthase sdnC constructs GGDP from farnesyl diphosphate and isopentenyl diphosphate. The diterpene cyclase sdnA then catalyzes the cyclization of GGDP to afford cycloaraneosene. Cycloaraneosene is then hydroxylated four times by the putative cytochrome P450 monooxygenases sdnB, sdnE, sdnF and sdnH to give a hydroxylated cycloaraneosene derivative such as cycloaraneosene-8,9,13,19-tetraol. Although the order of the hydroxylations is unclear, at least C8, C9 and C13 of the cycloaraneosene skeleton are hydroxylated before the sordaricin formation. Dehydration of the 13-hydroxy group of the hydroxylated cycloaraneosene derivative might be catalyzed by an unassigned hypothetical protein such as sdnG and sdnP to construct the cyclopentadiene moiety. The FAD-dependent oxidoreductase sdnN is proposed to catalyze the oxidation at C9 of the hydroxylated cycloaraneosene derivative and also catalyze the Baeyer-Villiger oxidation to give the lactone intermediate. The presumed lactone intermediate would be hydrolyzed to give an acrolein moiety and a carboxylate moiety. Then, [4+2]cycloaddition would occur between the acrolein moiety and the cyclopentadiene moiety to give sordaricin. SdnN might also be involved in the [4+2]cycloaddition after the hypothesized oxidation to accommodate the oxidized product and prompt the [4+2]cycloaddition. GDP-6-deoxy-D-altrose may be biosynthesized from GDP-D-mannose by the putative GDP-mannose-4,6-dehydratase sdnI and the short-chain dehydrogenase sdnK. The glycosyltransferase sdnJ catalyzes the attachment of 6-deoxy-D-altrose onto the 19-hydroxy group of sordaricin to give 4'-O-demethylsordarin. The methyltransferase sdnD would complete the biosynthesis of sordarin. Sordarin can be further modified into hypoxysordarin. The unique acyl chain at the 3'-hydroxy group of hypoxysordarin would be constructed by an iterative type I PKS sdnO and the trans-acting polyketide methyltransferase sdnL. SdnL would be responsible for the introduction of an alpha-methyl group of the polyketide chain. Alternatively, the putative beta-lactamase-like sdnR might be responsible for the cleavage and transfer of the polyketide chain from the PKS sdnO to sordarin. Two putative cytochrome P450 monooxygenases, sdnQ and sdnT, might catalyze the epoxidations of the polyketide chain to complete the biosynthesis of hypoxysordarin. Transcriptional regulators sdnM and sdnS are presumably encoded for the transcriptional regulation of the expression of the sdn gene cluster. The protein is Highly reducing polyketide synthase sdnO of Sordaria araneosa (Pleurage araneosa).